A 145-amino-acid polypeptide reads, in one-letter code: Selenoprotein M (145 aa).

Residues 1–23 form the signal peptide; that stretch reads MSILLSPPSLLLLLAALVAPATS. Active-site nucleophile residues include Cys45 and Sec48. Residues 45-48 constitute a cross-link (cysteinyl-selenocysteine (Cys-Sec)); sequence CGGU. Sec48 is a non-standard amino acid (selenocysteine). A disordered region spans residues 125 to 145; sequence PPEYLWAPAKPPEEASEHDDL.

It belongs to the selenoprotein M/F family. As to expression, widely expressed. Highly expressed in brain.

Its subcellular location is the cytoplasm. It is found in the perinuclear region. The protein resides in the endoplasmic reticulum. It localises to the golgi apparatus. In terms of biological role, may function as a thiol-disulfide oxidoreductase that participates in disulfide bond formation. The sequence is that of Selenoprotein M from Mus musculus (Mouse).